The following is a 350-amino-acid chain: N-acetyl-gamma-glutamyl-phosphate reductase (350 aa).

Cys-153 is an active-site residue.

This sequence belongs to the NAGSA dehydrogenase family. Type 1 subfamily.

The protein resides in the cytoplasm. It carries out the reaction N-acetyl-L-glutamate 5-semialdehyde + phosphate + NADP(+) = N-acetyl-L-glutamyl 5-phosphate + NADPH + H(+). Its pathway is amino-acid biosynthesis; L-arginine biosynthesis; N(2)-acetyl-L-ornithine from L-glutamate: step 3/4. In terms of biological role, catalyzes the NADPH-dependent reduction of N-acetyl-5-glutamyl phosphate to yield N-acetyl-L-glutamate 5-semialdehyde. The polypeptide is N-acetyl-gamma-glutamyl-phosphate reductase (Gloeobacter violaceus (strain ATCC 29082 / PCC 7421)).